The sequence spans 219 residues: Charged multivesicular body protein 5 (219 aa).

Residues 1–10 (MNRFFGKAKP) are compositionally biased toward basic residues. The disordered stretch occupies residues 1–21 (MNRFFGKAKPKAPPPSLTDCI). Residues 26–179 (SRAESIDKKI…LGDELLADED (154 aa)) are a coiled coil. Ser86 is subject to Phosphoserine. The disordered stretch occupies residues 188 to 219 (SAPAIPEGVPTDTKNKDGVLVDEFGLPQIPAS).

The protein belongs to the SNF7 family. Probable peripherally associated component of the endosomal sorting required for transport complex III (ESCRT-III). ESCRT-III components are thought to multimerize to form a flat lattice on the perimeter membrane of the endosome. Several assembly forms of ESCRT-III may exist that interact and act sequentially. Interacts with VTA1. Interacts with CHMP2A. Interacts with VTA1; the interaction involves soluble CHMP5. Interacts with NOD2. Interacts with BROX. In terms of processing, ISGylated. Isgylation inhibits its interaction with VTA1.

It localises to the cytoplasm. The protein resides in the cytosol. The protein localises to the endosome membrane. Its subcellular location is the midbody. In terms of biological role, probable peripherally associated component of the endosomal sorting required for transport complex III (ESCRT-III) which is involved in multivesicular bodies (MVBs) formation and sorting of endosomal cargo proteins into MVBs. MVBs contain intraluminal vesicles (ILVs) that are generated by invagination and scission from the limiting membrane of the endosome and mostly are delivered to lysosomes enabling degradation of membrane proteins, such as stimulated growth factor receptors, lysosomal enzymes and lipids. The MVB pathway appears to require the sequential function of ESCRT-O, -I,-II and -III complexes. ESCRT-III proteins mostly dissociate from the invaginating membrane before the ILV is released. The ESCRT machinery also functions in topologically equivalent membrane fission events, such as the terminal stages of cytokinesis. ESCRT-III proteins are believed to mediate the necessary vesicle extrusion and/or membrane fission activities, possibly in conjunction with the AAA ATPase VPS4. This chain is Charged multivesicular body protein 5 (Chmp5), found in Mus musculus (Mouse).